A 353-amino-acid chain; its full sequence is Phospho-N-acetylmuramoyl-pentapeptide-transferase (353 aa).

Transmembrane regions (helical) follow at residues 16-36, 64-84, 88-108, 130-150, 160-180, 198-218, 228-248, 256-276, 281-301, and 330-350; these read YISV…MYLM, AGTP…ATVL, LNNF…LIGI, LIFQ…YGHS, FPLF…IVGS, SILA…AVFA, IAGE…AFLW, VFMG…LAIV, ILLL…ILQV, and KIIV…LLSL.

It belongs to the glycosyltransferase 4 family. MraY subfamily. It depends on Mg(2+) as a cofactor.

The protein resides in the cell inner membrane. It catalyses the reaction UDP-N-acetyl-alpha-D-muramoyl-L-alanyl-gamma-D-glutamyl-meso-2,6-diaminopimeloyl-D-alanyl-D-alanine + di-trans,octa-cis-undecaprenyl phosphate = di-trans,octa-cis-undecaprenyl diphospho-N-acetyl-alpha-D-muramoyl-L-alanyl-D-glutamyl-meso-2,6-diaminopimeloyl-D-alanyl-D-alanine + UMP. It functions in the pathway cell wall biogenesis; peptidoglycan biosynthesis. Catalyzes the initial step of the lipid cycle reactions in the biosynthesis of the cell wall peptidoglycan: transfers peptidoglycan precursor phospho-MurNAc-pentapeptide from UDP-MurNAc-pentapeptide onto the lipid carrier undecaprenyl phosphate, yielding undecaprenyl-pyrophosphoryl-MurNAc-pentapeptide, known as lipid I. This Aliarcobacter butzleri (strain RM4018) (Arcobacter butzleri) protein is Phospho-N-acetylmuramoyl-pentapeptide-transferase.